The following is a 630-amino-acid chain: MKEKHNPRRKYCLISGLAIIFSLWIIIGNGAKVQAETITVPTPIKQIFSDDAFAETIKDNLKKKSVTDAVTQNELNSIDQIIANNSDIKSVQGIQYLPNVTKLFLNGNKLTDIKPLANLKNLGWLFLDENKVKDLSSLKDLKKLKSLSLEHNGISDINGLVHLPQLESLYLGNNKITDITVLSRLTKLDTLSLEDNQISDIVPLAGLTKLQNLYLSKNHISDLRALAGLKNLDVLELFSQECLNKPINHQSNLVVPNTVKNTDGSLVTPEIISDDGDYEKPNVKWHLPEFTNEVSFIFYQPVTIGKAKARFHGRVTQPLKEVYTVSYDVDGTVIKTKVEAGTRITAPKPPTKQGYVFKGWYTEKNGGHEWNFNTDYMSGNDFTLYAVFKAETTEKAVNLTRYVKYIRGNAGIYKLPREDNSLKQGTLASHRCKALTVDREARNGGKLWYRLKNIGWTKAENLSLDRYDKMEYDKGVTAYARVRNASGNSVWTKPYNTAGAKHVNKLSVYQGKNMRILREAKTPITTWYQFSIGGKVIGWVDTRALNTFYKQSMEKPTRLTRYVSANKAGESYYKVPVADNPVKRGTLAKYKNQKLIVDCQATIEGQLWYRIRTSSTFIGWTKAANLRAQK.

The first 30 residues, 1–30 (MKEKHNPRRKYCLISGLAIIFSLWIIIGNG), serve as a signal peptide directing secretion. The LRRNT domain occupies 31 to 76 (AKVQAETITVPTPIKQIFSDDAFAETIKDNLKKKSVTDAVTQNELN). LRR repeat units lie at residues 75–97 (LNSIDQIIANNSDIKSVQGIQYL), 98–121 (PNVTKLFLNGNKLTDIKPLANLKN), 123–141 (GWLFLDENKVKDLSSLKDL), 142–163 (KKLKSLSLEHNGISDINGLVHL), 164–187 (PQLESLYLGNNKITDITVLSRLTK), 189–207 (DTLSLEDNQISDIVPLAGL), and 208–231 (TKLQNLYLSKNHISDLRALAGLKN). The interval 241–319 (ECLNKPINHQ…RFHGRVTQPL (79 aa)) is ig-like region. An LRRCT domain is found at 241 to 330 (ECLNKPINHQ…EVYTVSYDVD (90 aa)). Positions 320–392 (KEVYTVSYDV…TLYAVFKAET (73 aa)) are b repeat region. GW domains follow at residues 393 to 467 (TEKA…LDRY), 472 to 550 (YDKG…TFYK), and 553 to 630 (MEKP…RAQK). The segment at 399 to 630 (LTRYVKYIRG…TKAANLRAQK (232 aa)) is GW repeat region, necessary and sufficient for cell surface attachment, interacts with host C1QBP and with heparin.

The protein belongs to the internalin family. As to quaternary structure, interacts via its LRR repeats plus the Ig-like region with the extracellular portion (residues 25-741) of its receptor MET; MET can bind HGF, its endogenous ligand, and InlB simultaneously. Probably forms a dimer upon interaction with host MET, which subsequently allows dimerization of the host MET and subsequent host signaling; dimerization probably occurs via the convex surface of InlB. Prevention of dimerization does not block interaction with MET but prevents downstream action.

The protein localises to the secreted. It localises to the cytoplasm. It is found in the cell membrane. Mediates the entry of L.monocytogenes into normally non-phagocytic mammalian host cells. Its host receptor is hepatocyte growth factor receptor (HGF receptor, a tyrosine kinase, MET) which is tyrosine-phosphorylated in response to InlB. Downstream targets MAPK1/MAPK3 (Erk1/2) and AKT are phosphorylated in response to InlB, which also causes cell colony scattering. Complement component 1 Q subcomponent-binding protein (gC1q-R, C1QBP) has been suggested to also act an InlB receptor, but this is less certain. Stimulation of Tyr-phosphorylation of MET by InlB is potentiated by the InlB GW domains and glycosaminoglycans such as heparin. The sequence is that of Internalin B (inlB) from Listeria monocytogenes serovar 1/2a (strain ATCC BAA-679 / EGD-e).